Consider the following 347-residue polypeptide: NADH-quinone oxidoreductase subunit H (347 aa).

9 helical membrane passes run 13-33 (IIMI…IAYV), 50-70 (PNVV…KFVF), 82-102 (AVFL…WAVV), 115-135 (VGIL…IMGG), 161-181 (IGFV…TDIV), 198-218 (FLDW…ISAL), 263-283 (CALT…IWIL), 286-306 (VPGI…FAMV), and 321-341 (LGWK…AFVL).

This sequence belongs to the complex I subunit 1 family. In terms of assembly, NDH-1 is composed of 14 different subunits. Subunits NuoA, H, J, K, L, M, N constitute the membrane sector of the complex.

It is found in the cell inner membrane. It carries out the reaction a quinone + NADH + 5 H(+)(in) = a quinol + NAD(+) + 4 H(+)(out). In terms of biological role, NDH-1 shuttles electrons from NADH, via FMN and iron-sulfur (Fe-S) centers, to quinones in the respiratory chain. The immediate electron acceptor for the enzyme in this species is believed to be ubiquinone. Couples the redox reaction to proton translocation (for every two electrons transferred, four hydrogen ions are translocated across the cytoplasmic membrane), and thus conserves the redox energy in a proton gradient. This subunit may bind ubiquinone. This is NADH-quinone oxidoreductase subunit H from Rhizobium johnstonii (strain DSM 114642 / LMG 32736 / 3841) (Rhizobium leguminosarum bv. viciae).